A 171-amino-acid chain; its full sequence is NADH-quinone oxidoreductase subunit C (171 aa).

It belongs to the complex I 30 kDa subunit family. NDH-1 is composed of 14 different subunits. Subunits NuoB, C, D, E, F, and G constitute the peripheral sector of the complex.

The protein localises to the cell membrane. The catalysed reaction is a quinone + NADH + 5 H(+)(in) = a quinol + NAD(+) + 4 H(+)(out). NDH-1 shuttles electrons from NADH, via FMN and iron-sulfur (Fe-S) centers, to quinones in the respiratory chain. The immediate electron acceptor for the enzyme in this species is believed to be ubiquinone. Couples the redox reaction to proton translocation (for every two electrons transferred, four hydrogen ions are translocated across the cytoplasmic membrane), and thus conserves the redox energy in a proton gradient. The chain is NADH-quinone oxidoreductase subunit C from Herpetosiphon aurantiacus (strain ATCC 23779 / DSM 785 / 114-95).